Here is a 362-residue protein sequence, read N- to C-terminus: Phosphoserine aminotransferase (362 aa).

Residue Arg-43 participates in L-glutamate binding. Pyridoxal 5'-phosphate is bound by residues 77–78 (AR), Trp-103, Thr-153, Asp-173, and Gln-196. At Lys-197 the chain carries N6-(pyridoxal phosphate)lysine.

Belongs to the class-V pyridoxal-phosphate-dependent aminotransferase family. SerC subfamily. As to quaternary structure, homodimer. Pyridoxal 5'-phosphate is required as a cofactor.

The protein localises to the cytoplasm. It carries out the reaction O-phospho-L-serine + 2-oxoglutarate = 3-phosphooxypyruvate + L-glutamate. The catalysed reaction is 4-(phosphooxy)-L-threonine + 2-oxoglutarate = (R)-3-hydroxy-2-oxo-4-phosphooxybutanoate + L-glutamate. The protein operates within amino-acid biosynthesis; L-serine biosynthesis; L-serine from 3-phospho-D-glycerate: step 2/3. Its pathway is cofactor biosynthesis; pyridoxine 5'-phosphate biosynthesis; pyridoxine 5'-phosphate from D-erythrose 4-phosphate: step 3/5. In terms of biological role, catalyzes the reversible conversion of 3-phosphohydroxypyruvate to phosphoserine and of 3-hydroxy-2-oxo-4-phosphonooxybutanoate to phosphohydroxythreonine. This is Phosphoserine aminotransferase from Legionella pneumophila (strain Corby).